We begin with the raw amino-acid sequence, 123 residues long: Large ribosomal subunit protein bL12 (123 aa).

This sequence belongs to the bacterial ribosomal protein bL12 family. Homodimer. Part of the ribosomal stalk of the 50S ribosomal subunit. Forms a multimeric L10(L12)X complex, where L10 forms an elongated spine to which 2 to 4 L12 dimers bind in a sequential fashion. Binds GTP-bound translation factors.

Forms part of the ribosomal stalk which helps the ribosome interact with GTP-bound translation factors. Is thus essential for accurate translation. This is Large ribosomal subunit protein bL12 from Rhodopseudomonas palustris (strain BisB18).